The sequence spans 192 residues: Transmembrane protein 11, mitochondrial (192 aa).

The segment at 1–20 (MAAWGRRRLGPGSSGGSARE) is disordered. Helical transmembrane passes span 84 to 100 (TAVLAGTACLFTPLALP) and 107 to 124 (ISLPAGVLSLACCTLYGI).

It belongs to the TMEM11 family. As to quaternary structure, associates with the mitochondrial contact site and cristae organizing system (MICOS) complex, composed of at least MICOS10/MIC10, CHCHD3/MIC19, CHCHD6/MIC25, APOOL/MIC27, IMMT/MIC60, APOO/MIC23/MIC26 and QIL1/MIC13. This complex was also known under the names MINOS or MitOS complex. The MICOS complex associates with mitochondrial outer membrane proteins SAMM50, MTX1, MTX2 and DNAJC11, mitochondrial inner membrane protein TMEM11 and with HSPA9. Interacts with IMMT/MIC60.

The protein resides in the mitochondrion inner membrane. In terms of biological role, plays a role in mitochondrial morphogenesis. In Homo sapiens (Human), this protein is Transmembrane protein 11, mitochondrial (TMEM11).